The chain runs to 694 residues: DNA-directed RNA polymerase subunit beta' (694 aa).

The Zn(2+) site is built by Cys69, Cys71, Cys87, and Cys90. Positions 489, 491, and 493 each coordinate Mg(2+).

It belongs to the RNA polymerase beta' chain family. RpoC1 subfamily. In terms of assembly, in plastids the minimal PEP RNA polymerase catalytic core is composed of four subunits: alpha, beta, beta', and beta''. When a (nuclear-encoded) sigma factor is associated with the core the holoenzyme is formed, which can initiate transcription. Requires Mg(2+) as cofactor. The cofactor is Zn(2+).

The protein resides in the plastid. Its subcellular location is the chloroplast. It catalyses the reaction RNA(n) + a ribonucleoside 5'-triphosphate = RNA(n+1) + diphosphate. In terms of biological role, DNA-dependent RNA polymerase catalyzes the transcription of DNA into RNA using the four ribonucleoside triphosphates as substrates. This Gossypium barbadense (Sea Island cotton) protein is DNA-directed RNA polymerase subunit beta'.